The sequence spans 142 residues: Large ribosomal subunit protein uL11 (142 aa).

The protein belongs to the universal ribosomal protein uL11 family. As to quaternary structure, part of the ribosomal stalk of the 50S ribosomal subunit. Interacts with L10 and the large rRNA to form the base of the stalk. L10 forms an elongated spine to which L12 dimers bind in a sequential fashion forming a multimeric L10(L12)X complex. One or more lysine residues are methylated.

In terms of biological role, forms part of the ribosomal stalk which helps the ribosome interact with GTP-bound translation factors. The polypeptide is Large ribosomal subunit protein uL11 (Histophilus somni (strain 129Pt) (Haemophilus somnus)).